A 94-amino-acid polypeptide reads, in one-letter code: MSSRRSSRSRQSGSSRISDDQISDLVSKLQHLIPELRRRRSDKVSASKVLQETCNYIRNLHREVDDLSDRLSELLASTDDNSAEAAIIRSLLNY.

Residues 1–20 (MSSRRSSRSRQSGSSRISDD) are disordered. Residues 6–60 (SSRSRQSGSSRISDDQISDLVSKLQHLIPELRRRRSDKVSASKVLQETCNYIRNL) form the bHLH domain.

The protein belongs to the bHLH protein family. As to quaternary structure, interacts with HFR1.

The protein localises to the cytoplasm. Its subcellular location is the nucleus. In terms of biological role, atypical and probable non DNA-binding bHLH transcription factor that regulates light-mediated responses in day light conditions by binding and inhibiting the activity of the bHLH transcription factor HFR1, a critical regulator of light signaling and shade avoidance. Forms non-functional heterodimers with HFR1, causing liberation and activation of PIF4 from the transcriptionally inactive HFR1-PIF4 complex. This is Transcription factor PRE6 (PRE6) from Arabidopsis thaliana (Mouse-ear cress).